The primary structure comprises 164 residues: MSVVTGGGEAAGGTSGGGARVFFQSPRGGTGGSRESSSHSGSSREDSAPVATVAAAGQVQQQQRRHQQGKVTVKYDRKELRKRLVLEEWIVEQLGQLYGCEEEEMPDVEIDIDDLLDADSEEERASKLQEALVDCYKPTEEFIRELLSRIRGMRKLSPPQKKSV.

Residues 1-19 (MSVVTGGGEAAGGTSGGGA) show a composition bias toward gly residues. The segment at 1–72 (MSVVTGGGEA…QRRHQQGKVT (72 aa)) is disordered. N-acetylserine is present on Ser2. Position 25 is a phosphoserine (Ser25). Arg27 carries the omega-N-methylarginine modification. Ser33 is modified (phosphoserine). Residues 50–62 (VATVAAAGQVQQQ) show a composition bias toward low complexity. Position 72 is a phosphothreonine; by ILK1 (Thr72).

This sequence belongs to the PP1 inhibitor family. Post-translationally, has over 600-fold higher inhibitory activity when phosphorylated, creating a molecular switch for regulating the phosphorylation status of PPP1CA substrates and smooth muscle contraction. The main inhibitory site appears to be Thr-72.

It is found in the endomembrane system. Inhibitor of the PP1 regulatory subunit PPP1CA. The protein is Protein phosphatase 1 regulatory subunit 14C (Ppp1r14c) of Rattus norvegicus (Rat).